We begin with the raw amino-acid sequence, 512 residues long: Cytochrome P450 76C2 (512 aa).

A helical membrane pass occupies residues 3–23 (IIFEQALFPLFCFVLSFFIIF). Residue Cys-451 coordinates heme.

Belongs to the cytochrome P450 family. Heme is required as a cofactor.

It is found in the membrane. The protein is Cytochrome P450 76C2 (CYP76C2) of Arabidopsis thaliana (Mouse-ear cress).